The chain runs to 529 residues: CTP synthase (529 aa).

The segment at Met-1–Leu-266 is amidoligase domain. Residue Ser-13 coordinates CTP. Ser-13 provides a ligand contact to UTP. Ser-14 to Thr-19 lines the ATP pocket. Tyr-54 lines the L-glutamine pocket. Residue Asp-71 participates in ATP binding. Positions 71 and 141 each coordinate Mg(2+). Residues Asp-148 to Glu-150, Lys-187 to Gln-192, and Lys-223 contribute to the CTP site. UTP contacts are provided by residues Lys-187–Gln-192 and Lys-223. The Glutamine amidotransferase type-1 domain maps to Lys-291–Ala-529. Residue Gly-354 participates in L-glutamine binding. Catalysis depends on Cys-381, which acts as the Nucleophile; for glutamine hydrolysis. Residues Phe-382–Gln-385, Glu-405, and Arg-462 each bind L-glutamine. Catalysis depends on residues His-506 and Glu-508.

Belongs to the CTP synthase family. In terms of assembly, homotetramer.

The catalysed reaction is UTP + L-glutamine + ATP + H2O = CTP + L-glutamate + ADP + phosphate + 2 H(+). It carries out the reaction L-glutamine + H2O = L-glutamate + NH4(+). The enzyme catalyses UTP + NH4(+) + ATP = CTP + ADP + phosphate + 2 H(+). Its pathway is pyrimidine metabolism; CTP biosynthesis via de novo pathway; CTP from UDP: step 2/2. With respect to regulation, allosterically activated by GTP, when glutamine is the substrate; GTP has no effect on the reaction when ammonia is the substrate. The allosteric effector GTP functions by stabilizing the protein conformation that binds the tetrahedral intermediate(s) formed during glutamine hydrolysis. Inhibited by the product CTP, via allosteric rather than competitive inhibition. Functionally, catalyzes the ATP-dependent amination of UTP to CTP with either L-glutamine or ammonia as the source of nitrogen. Regulates intracellular CTP levels through interactions with the four ribonucleotide triphosphates. The chain is CTP synthase from Sulfolobus acidocaldarius (strain ATCC 33909 / DSM 639 / JCM 8929 / NBRC 15157 / NCIMB 11770).